Consider the following 469-residue polypeptide: 6-phosphofructo-2-kinase/fructose-2,6-bisphosphatase 4 (469 aa).

The interval 1 to 249 (MASPRELTQN…YYLMNIHVTP (249 aa)) is 6-phosphofructo-2-kinase. Ser-29 is modified (phosphoserine; by PKC). 46 to 54 (GLPARGKTY) serves as a coordination point for ATP. Beta-D-fructose 6-phosphate contacts are provided by Arg-79 and Arg-103. Asp-129 is an active-site residue. 2 residues coordinate beta-D-fructose 6-phosphate: Thr-131 and Arg-137. Residue Cys-159 is part of the active site. ATP is bound at residue 168-173 (NIVQVK). Lys-173, Arg-194, and Tyr-198 together coordinate beta-D-fructose 6-phosphate. Residues 250 to 469 (RSIYLCRHGE…EALVTVPAHQ (220 aa)) are fructose-2,6-bisphosphatase. Residue Arg-256 coordinates beta-D-fructose 2,6-bisphosphate. The active-site Tele-phosphohistidine intermediate is the His-257. Beta-D-fructose 2,6-bisphosphate contacts are provided by Asn-263, Gly-269, and Arg-306. The Proton donor/acceptor role is filled by Glu-326. Residues Tyr-337, Arg-351, Lys-355, Tyr-366, Gln-392, and Arg-396 each coordinate beta-D-fructose 2,6-bisphosphate. 348–351 (FALR) lines the ATP pocket. ATP-binding positions include 392-396 (QAVMR) and Tyr-428. Thr-444 is subject to Phosphothreonine; by PKC.

The protein in the C-terminal section; belongs to the phosphoglycerate mutase family. As to quaternary structure, homodimer. Testis.

It carries out the reaction beta-D-fructose 2,6-bisphosphate + H2O = beta-D-fructose 6-phosphate + phosphate. The catalysed reaction is beta-D-fructose 6-phosphate + ATP = beta-D-fructose 2,6-bisphosphate + ADP + H(+). With respect to regulation, the most important regulatory mechanism of these opposing activities is by phosphorylation and dephosphorylation of the enzyme. Functionally, synthesis and degradation of fructose 2,6-bisphosphate. The protein is 6-phosphofructo-2-kinase/fructose-2,6-bisphosphatase 4 (Pfkfb4) of Rattus norvegicus (Rat).